The following is a 362-amino-acid chain: 3-dehydroquinate synthase (362 aa).

NAD(+)-binding positions include 74 to 79 (DGEEHK), 108 to 112 (GVTGD), 132 to 133 (TT), lysine 145, and lysine 154. Glutamate 187, histidine 250, and histidine 267 together coordinate Zn(2+).

This sequence belongs to the sugar phosphate cyclases superfamily. Dehydroquinate synthase family. Requires Co(2+) as cofactor. Zn(2+) is required as a cofactor. NAD(+) serves as cofactor.

The protein resides in the cytoplasm. The enzyme catalyses 7-phospho-2-dehydro-3-deoxy-D-arabino-heptonate = 3-dehydroquinate + phosphate. It functions in the pathway metabolic intermediate biosynthesis; chorismate biosynthesis; chorismate from D-erythrose 4-phosphate and phosphoenolpyruvate: step 2/7. Functionally, catalyzes the conversion of 3-deoxy-D-arabino-heptulosonate 7-phosphate (DAHP) to dehydroquinate (DHQ). In Syntrophotalea carbinolica (strain DSM 2380 / NBRC 103641 / GraBd1) (Pelobacter carbinolicus), this protein is 3-dehydroquinate synthase.